We begin with the raw amino-acid sequence, 272 residues long: NH(3)-dependent NAD(+) synthetase (272 aa).

An ATP-binding site is contributed by 45-52; sequence GISGGQDS. Residue aspartate 51 participates in Mg(2+) binding. Arginine 138 contacts deamido-NAD(+). Threonine 158 contacts ATP. Glutamate 163 lines the Mg(2+) pocket. 2 residues coordinate deamido-NAD(+): lysine 171 and aspartate 178. Lysine 187 and threonine 209 together coordinate ATP. Position 258–259 (258–259) interacts with deamido-NAD(+); it reads HK.

It belongs to the NAD synthetase family. In terms of assembly, homodimer.

It catalyses the reaction deamido-NAD(+) + NH4(+) + ATP = AMP + diphosphate + NAD(+) + H(+). Its pathway is cofactor biosynthesis; NAD(+) biosynthesis; NAD(+) from deamido-NAD(+) (ammonia route): step 1/1. In terms of biological role, catalyzes the ATP-dependent amidation of deamido-NAD to form NAD. Uses ammonia as a nitrogen source. In Bacillus velezensis (strain DSM 23117 / BGSC 10A6 / LMG 26770 / FZB42) (Bacillus amyloliquefaciens subsp. plantarum), this protein is NH(3)-dependent NAD(+) synthetase.